The sequence spans 87 residues: uncharacterized protein (87 aa).

The first 25 residues, 1–25 (MKIRKILLSSALSFGMLISAVPALA), serve as a signal peptide directing secretion.

This is an uncharacterized protein from Bacillus subtilis (strain 168).